The sequence spans 364 residues: Fructose-bisphosphate aldolase A (364 aa).

Threonine 9 is subject to Phosphothreonine. Serine 36 and serine 39 each carry phosphoserine. Lysine 42 carries the post-translational modification N6-acetyllysine; alternate. Lysine 42 is covalently cross-linked (Glycyl lysine isopeptide (Lys-Gly) (interchain with G-Cter in SUMO1); alternate). Residue lysine 42 forms a Glycyl lysine isopeptide (Lys-Gly) (interchain with G-Cter in SUMO2); alternate linkage. Position 43 (arginine 43) interacts with beta-D-fructose 1,6-bisphosphate. Serine 46 bears the Phosphoserine mark. Lysine 99 carries the post-translational modification N6-(2-hydroxyisobutyryl)lysine. Residue lysine 108 is modified to N6-acetyllysine. Lysine 111 is subject to N6-acetyllysine; alternate. An N6-malonyllysine; alternate modification is found at lysine 111. A Phosphoserine modification is found at serine 132. Lysine 147 carries the N6-(2-hydroxyisobutyryl)lysine modification. The active-site Proton acceptor is the glutamate 188. Lysine 230 functions as the Schiff-base intermediate with dihydroxyacetone-P in the catalytic mechanism. Residue serine 272 is modified to Phosphoserine. Residues 272–274 (SGG), serine 301, and arginine 304 each bind beta-D-fructose 1,6-bisphosphate. Residue lysine 312 is modified to N6-malonyllysine. Lysine 330 carries the post-translational modification N6-acetyllysine. Asparagine 361 is subject to Deamidated asparagine; in form beta.

This sequence belongs to the class I fructose-bisphosphate aldolase family. As to quaternary structure, homotetramer. Interacts with SNX9 and WAS. Interacts with FBP2; the interaction blocks FBP2 inhibition by physiological concentrations of AMP and reduces inhibition by Ca(2+). In terms of processing, asn-361 in form alpha is deaminated to Asp in form beta.

The protein localises to the cytoplasm. It is found in the myofibril. The protein resides in the sarcomere. Its subcellular location is the i band. It localises to the m line. It carries out the reaction beta-D-fructose 1,6-bisphosphate = D-glyceraldehyde 3-phosphate + dihydroxyacetone phosphate. It participates in carbohydrate degradation; glycolysis; D-glyceraldehyde 3-phosphate and glycerone phosphate from D-glucose: step 4/4. In terms of biological role, plays a key role in glycolysis and gluconeogenesis. In addition, may also function as scaffolding protein. In Oryctolagus cuniculus (Rabbit), this protein is Fructose-bisphosphate aldolase A (ALDOA).